The sequence spans 759 residues: MISSTSVYGLKMQWTPEHAQWPEQHFDITSTTRSPAHKVEAYRGHLQRTYQYAWANDDISALTASNLLKKYAEKYSGILEGPVDRPVLSNYSDTPSGLVNGRKNDSEPWQPSLNSEAVYPMNCVPDVITASKAGVSSALPPVDVSASIGSSPGVASNLTEPSYSSSTCGSHTVPSLHAGLPSQEYAPGYNGSYLHSTYSSQATPALPSPHPSPLHSSGLLQPPPPPPPPPALVPGYNGTSNLSSYSYPSASYPPQTAVGSGYSPGGAPPPPSAYLPSGIPAPTPLPPTTVPGYTYQGHGLTPIAPSALTNNSASSLKRKAFYMAGQGDMDSSYGNYSYGQQRSTQSPMYRMPDNSISNSNRGNGFDRNAETSSLAFKPTKQLMPSEQQRKFSSQSSRALTPPSYSTAKNSLGSRSSESFGKYTSPVMSEHGDDHRQLLAHPIQGPGLRAATSSNHSVDEQLKNTDTHLIDLVTNEIITQGPPVDWSDIAGLDLVKAVIKEEVLWPVLRSDAFSGLTALPRSILLFGPRGTGKTLLGRCIASQLGATFFKIAGSGLVAKWIGEAEKIIHASFLVARCRQPSVIFVSDIDMLLSSQVSEEHSPVSRMRTEFLMQLDTVLTSAEDQIVVICATSKPEEIDESLRRYFMKRLLIPLPDSTARHQIIVQLLTQHNYCLNDKEFALLVQRTEGFSGLDVAHLCQEAAVGPLHAMPATDLSAIMPSQLRPVTYQDFENAFCKIQPSISQKELDMYVEWNKMFGCSQ.

4 disordered regions span residues 89–111 (SNYSDTPSGLVNGRKNDSEPWQP), 200–237 (SQATPALPSPHPSPLHSSGLLQPPPPPPPPPALVPGYN), 258–293 (VGSGYSPGGAPPPPSAYLPSGIPAPTPLPPTTVPGY), and 337–429 (SYGQ…VMSE). 2 stretches are compositionally biased toward pro residues: residues 221–232 (QPPPPPPPPPAL) and 266–289 (GAPPPPSAYLPSGIPAPTPLPPTT). 2 stretches are compositionally biased toward polar residues: residues 337-347 (SYGQQRSTQSP) and 382-418 (LMPSEQQRKFSSQSSRALTPPSYSTAKNSLGSRSSES). A Phosphothreonine modification is found at threonine 400. ATP-binding positions include alanine 489 and 529–534 (GTGKTL).

Belongs to the AAA ATPase family. As to quaternary structure, interacts with AKAP8 (via C-terminus). As to expression, widely expressed.

The protein localises to the nucleus matrix. It is found in the cytoplasm. The protein resides in the cytoskeleton. Its subcellular location is the microtubule organizing center. It localises to the centrosome. ATP-dependent microtubule severing protein. Severs microtubules along their length and depolymerizes their ends, primarily the minus-end, suppressing microtubule growth from and attachment to centrosomes. Microtubule severing may promote rapid reorganization of cellular microtubule arrays and the release of microtubules from the centrosome following nucleation. Microtubule release from the mitotic spindle poles may allow depolymerization of the microtubule end proximal to the spindle pole, leading to poleward microtubule flux and poleward motion of chromosome. The polypeptide is Fidgetin (Fign) (Mus musculus (Mouse)).